Here is a 238-residue protein sequence, read N- to C-terminus: 2-C-methyl-D-erythritol 4-phosphate cytidylyltransferase (238 aa).

Belongs to the IspD/TarI cytidylyltransferase family. IspD subfamily.

It catalyses the reaction 2-C-methyl-D-erythritol 4-phosphate + CTP + H(+) = 4-CDP-2-C-methyl-D-erythritol + diphosphate. Its pathway is isoprenoid biosynthesis; isopentenyl diphosphate biosynthesis via DXP pathway; isopentenyl diphosphate from 1-deoxy-D-xylulose 5-phosphate: step 2/6. Its function is as follows. Catalyzes the formation of 4-diphosphocytidyl-2-C-methyl-D-erythritol from CTP and 2-C-methyl-D-erythritol 4-phosphate (MEP). In Acinetobacter baumannii (strain SDF), this protein is 2-C-methyl-D-erythritol 4-phosphate cytidylyltransferase.